Here is a 568-residue protein sequence, read N- to C-terminus: Mannitol 2-dehydrogenase (568 aa).

109–120 lines the NAD(+) pocket; the sequence is IVHVGVGGFHRA.

The protein belongs to the mannitol dehydrogenase family. Monomer.

The enzyme catalyses D-mannitol + NAD(+) = D-fructose + NADH + H(+). In terms of biological role, catalyzes the NAD(H)-dependent interconversion of D-fructose and D-mannitol in the mannitol metabolic pathway. The chain is Mannitol 2-dehydrogenase from Phaeosphaeria nodorum (strain SN15 / ATCC MYA-4574 / FGSC 10173) (Glume blotch fungus).